A 154-amino-acid chain; its full sequence is tRNA-splicing endonuclease (154 aa).

Residues Tyr-86, His-102, and Lys-133 contribute to the active site.

Belongs to the tRNA-intron endonuclease family. Archaeal short subfamily. In terms of assembly, homotetramer; although the tetramer contains four active sites, only two participate in the cleavage. Therefore, it should be considered as a dimer of dimers.

The catalysed reaction is pretRNA = a 3'-half-tRNA molecule with a 5'-OH end + a 5'-half-tRNA molecule with a 2',3'-cyclic phosphate end + an intron with a 2',3'-cyclic phosphate and a 5'-hydroxyl terminus.. Its function is as follows. Endonuclease that removes tRNA introns. Cleaves pre-tRNA at the 5'- and 3'-splice sites to release the intron. The products are an intron and two tRNA half-molecules bearing 2',3' cyclic phosphate and 5'-OH termini. Recognizes a pseudosymmetric substrate in which 2 bulged loops of 3 bases are separated by a stem of 4 bp. The protein is tRNA-splicing endonuclease of Nanoarchaeum equitans (strain Kin4-M).